We begin with the raw amino-acid sequence, 248 residues long: 2,3-bisphosphoglycerate-dependent phosphoglycerate mutase (248 aa).

Substrate contacts are provided by residues 8–15 (RHGESLWN), 21–22 (TG), Arg-60, 87–90 (EKHY), Lys-98, 114–115 (RR), and 183–184 (GN). His-9 functions as the Tele-phosphohistidine intermediate in the catalytic mechanism. Glu-87 (proton donor/acceptor) is an active-site residue.

This sequence belongs to the phosphoglycerate mutase family. BPG-dependent PGAM subfamily.

The enzyme catalyses (2R)-2-phosphoglycerate = (2R)-3-phosphoglycerate. It participates in carbohydrate degradation; glycolysis; pyruvate from D-glyceraldehyde 3-phosphate: step 3/5. Functionally, catalyzes the interconversion of 2-phosphoglycerate and 3-phosphoglycerate. The protein is 2,3-bisphosphoglycerate-dependent phosphoglycerate mutase of Porphyromonas gingivalis (strain ATCC 33277 / DSM 20709 / CIP 103683 / JCM 12257 / NCTC 11834 / 2561).